A 179-amino-acid polypeptide reads, in one-letter code: Large ribosomal subunit protein uL5 (179 aa).

It belongs to the universal ribosomal protein uL5 family. Part of the 50S ribosomal subunit; part of the 5S rRNA/L5/L18/L25 subcomplex. Contacts the 5S rRNA and the P site tRNA. Forms a bridge to the 30S subunit in the 70S ribosome.

This is one of the proteins that bind and probably mediate the attachment of the 5S RNA into the large ribosomal subunit, where it forms part of the central protuberance. In the 70S ribosome it contacts protein S13 of the 30S subunit (bridge B1b), connecting the 2 subunits; this bridge is implicated in subunit movement. Contacts the P site tRNA; the 5S rRNA and some of its associated proteins might help stabilize positioning of ribosome-bound tRNAs. The sequence is that of Large ribosomal subunit protein uL5 from Polaromonas naphthalenivorans (strain CJ2).